We begin with the raw amino-acid sequence, 200 residues long: Probable molybdenum cofactor guanylyltransferase (200 aa).

GTP contacts are provided by residues 9 to 11 (LAG), Lys-21, Asp-69, and Asp-100. Asp-100 is a Mg(2+) binding site.

This sequence belongs to the MobA family. Mg(2+) is required as a cofactor.

It localises to the cytoplasm. The enzyme catalyses Mo-molybdopterin + GTP + H(+) = Mo-molybdopterin guanine dinucleotide + diphosphate. Functionally, transfers a GMP moiety from GTP to Mo-molybdopterin (Mo-MPT) cofactor (Moco or molybdenum cofactor) to form Mo-molybdopterin guanine dinucleotide (Mo-MGD) cofactor. The polypeptide is Probable molybdenum cofactor guanylyltransferase (Bacillus anthracis (strain CDC 684 / NRRL 3495)).